Consider the following 319-residue polypeptide: Ankyrin repeat domain-containing protein 1 (319 aa).

Positions 63 to 89 form a coiled coil; the sequence is EKQLEAELKKKKLEQRSKLENLEDLEI. ANK repeat units follow at residues 152–181, 185–214, 218–247, 251–280, and 284–315; these read YKRT…QIEF, LEST…KISA, LLST…DLNA, EGDT…DLTI, and AGKT…KTSR.

As to quaternary structure, interacts with TTN/titin and YBX1.

Its subcellular location is the nucleus. In terms of biological role, may play an important role in endothelial cell activation. May act as a nuclear transcription factor that negatively regulates the expression of cardiac genes. The sequence is that of Ankyrin repeat domain-containing protein 1 (ANKRD1) from Oryctolagus cuniculus (Rabbit).